The following is a 62-amino-acid chain: Negative regulatory protein YxlE (62 aa).

A run of 2 helical transmembrane segments spans residues 7 to 27 (MILPLIVLQLALAVFALISCI) and 37 to 57 (WMWAAIIVCINIIGPILFFTV).

The protein resides in the cell membrane. Together with YxlD is important for negative regulation of sigma Y activity. This Bacillus subtilis (strain 168) protein is Negative regulatory protein YxlE (yxlE).